Here is a 347-residue protein sequence, read N- to C-terminus: Aromatic amino acid aminotransferase (347 aa).

The residue at position 214 (Lys214) is an N6-(pyridoxal phosphate)lysine.

The protein belongs to the class-II pyridoxal-phosphate-dependent aminotransferase family. In terms of assembly, homodimer. Pyridoxal 5'-phosphate serves as cofactor.

The enzyme catalyses an aromatic L-alpha-amino acid + 2-oxoglutarate = an aromatic oxo-acid + L-glutamate. In terms of biological role, aminotransferase that catalyzes the conversion of aromatic amino acids and 2-oxoglutarate into corresponding aromatic oxo acids and L-glutamate. This is Aromatic amino acid aminotransferase from Mycobacteroides abscessus (strain ATCC 19977 / DSM 44196 / CCUG 20993 / CIP 104536 / JCM 13569 / NCTC 13031 / TMC 1543 / L948) (Mycobacterium abscessus).